A 444-amino-acid chain; its full sequence is Elongation factor 1-alpha (444 aa).

The region spanning 15 to 236 (KPHINLAVVG…VLDTFQPPPR (222 aa)) is the tr-type G domain. The segment at 24–31 (GHVDNGKS) is G1. 24–31 (GHVDNGKS) serves as a coordination point for GTP. Position 31 (serine 31) interacts with Mg(2+). The interval 80-84 (GVTIE) is G2. The G3 stretch occupies residues 101 to 104 (DLPG). GTP contacts are provided by residues 101 to 105 (DLPGH) and 163 to 166 (NKMD). The segment at 163-166 (NKMD) is G4. A G5 region spans residues 202–204 (SAI).

Belongs to the TRAFAC class translation factor GTPase superfamily. Classic translation factor GTPase family. EF-Tu/EF-1A subfamily.

It localises to the cytoplasm. It catalyses the reaction GTP + H2O = GDP + phosphate + H(+). In terms of biological role, GTP hydrolase that promotes the GTP-dependent binding of aminoacyl-tRNA to the A-site of ribosomes during protein biosynthesis. This Pyrobaculum calidifontis (strain DSM 21063 / JCM 11548 / VA1) protein is Elongation factor 1-alpha.